We begin with the raw amino-acid sequence, 339 residues long: Heat-inducible transcription repressor HrcA (339 aa).

It belongs to the HrcA family.

Functionally, negative regulator of class I heat shock genes (grpE-dnaK-dnaJ and groELS operons). Prevents heat-shock induction of these operons. The protein is Heat-inducible transcription repressor HrcA of Acidothermus cellulolyticus (strain ATCC 43068 / DSM 8971 / 11B).